The chain runs to 311 residues: Ribosomal RNA small subunit methyltransferase H (311 aa).

Residues 35-37 (GGH), Asp-55, Phe-80, Asp-102, and Gln-109 each bind S-adenosyl-L-methionine.

It belongs to the methyltransferase superfamily. RsmH family.

The protein resides in the cytoplasm. It catalyses the reaction cytidine(1402) in 16S rRNA + S-adenosyl-L-methionine = N(4)-methylcytidine(1402) in 16S rRNA + S-adenosyl-L-homocysteine + H(+). Functionally, specifically methylates the N4 position of cytidine in position 1402 (C1402) of 16S rRNA. The polypeptide is Ribosomal RNA small subunit methyltransferase H (Pseudoalteromonas atlantica (strain T6c / ATCC BAA-1087)).